We begin with the raw amino-acid sequence, 193 residues long: Cysteine and glycine-rich protein 1 (193 aa).

The 52-residue stretch at 10–61 (CGVCQKTVYFAEEVQCEGNSFHKSCFLCMVCKKNLDSTTVAVHGEEIYCKSC) folds into the LIM zinc-binding 1 domain. The Nuclear localization signal signature appears at 64–69 (KKYGPK). Residue Ser-81 is modified to Phosphoserine. Residue Lys-84 is modified to N6-acetyllysine. Lys-91 is covalently cross-linked (Glycyl lysine isopeptide (Lys-Gly) (interchain with G-Cter in SUMO2)). 4 positions are modified to N6-acetyllysine: Lys-112, Lys-131, Lys-137, and Lys-161. One can recognise an LIM zinc-binding 2 domain in the interval 119-170 (CPRCSQAVYAAEKVIGAGKSWHKACFRCAKCGKGLESTTLADKDGEIYCKGC). Ser-192 carries the post-translational modification Phosphoserine.

As to quaternary structure, interacts with ASCC1; ASCC2 and TRIP4.

It localises to the nucleus. Functionally, could play a role in neuronal development. This Homo sapiens (Human) protein is Cysteine and glycine-rich protein 1 (CSRP1).